The chain runs to 232 residues: Charged multivesicular body protein 4c (232 aa).

2 disordered regions span residues 1–23 (MSKLGKFFKGSRSSRARAAPSAQ) and 172–232 (EQEE…AWAT). The interval 1-153 (MSKLGKFFKG…EISEAFSQRV (153 aa)) is intramolecular interaction with C-terminus. A compositionally biased stretch (low complexity) spans 11–23 (SRSSRARAAPSAQ). Coiled-coil stretches lie at residues 21–50 (SAQEALARLREIEEMMAKKQEYLENRIQRE) and 125–182 (LNKI…KMTS). The interval 154–232 (QFADGFDEDE…DFKQLAAWAT (79 aa)) is intramolecular interaction with N-terminus. A Phosphoserine; by AURKB modification is found at S210.

It belongs to the SNF7 family. Probable core component of the endosomal sorting required for transport complex III (ESCRT-III). ESCRT-III components are thought to multimerize to form a flat lattice on the perimeter membrane of the endosome. Several assembly forms of ESCRT-III may exist that interact and act sequentially. Self-associates. Interacts with CHMP2A. Interacts with CHMP4A. Interacts with CHMP4B. Interacts with CHMP6. Interacts with VPS4A. Interacts with PDCD6IP; the interaction is direct. Post-translationally, phosphorylated at Ser-210 by AURKB during cytokinesis: together with ZFYVE19/ANCHR, phosphorylated CHMP4C retains abscission-competent VPS4 (VPS4A and/or VPS4B) at the midbody ring until abscission checkpoint signaling is terminated at late cytokinesis.

The protein localises to the cytoplasm. Its subcellular location is the cytosol. It is found in the late endosome membrane. The protein resides in the midbody. It localises to the midbody ring. In terms of biological role, probable core component of the endosomal sorting required for transport complex III (ESCRT-III) which is involved in multivesicular bodies (MVBs) formation and sorting of endosomal cargo proteins into MVBs. MVBs contain intraluminal vesicles (ILVs) that are generated by invagination and scission from the limiting membrane of the endosome and mostly are delivered to lysosomes enabling degradation of membrane proteins, such as stimulated growth factor receptors, lysosomal enzymes and lipids. The MVB pathway appears to require the sequential function of ESCRT-O, -I,-II and -III complexes. ESCRT-III proteins mostly dissociate from the invaginating membrane before the ILV is released. The ESCRT machinery also functions in topologically equivalent membrane fission events, such as the terminal stages of cytokinesis. Key component of the cytokinesis checkpoint, a process required to delay abscission to prevent both premature resolution of intercellular chromosome bridges and accumulation of DNA damage: upon phosphorylation by AURKB, together with ZFYVE19/ANCHR, retains abscission-competent VPS4 (VPS4A and/or VPS4B) at the midbody ring until abscission checkpoint signaling is terminated at late cytokinesis. Deactivation of AURKB results in dephosphorylation of CHMP4C followed by its dissociation from ANCHR and VPS4 and subsequent abscission. ESCRT-III proteins are believed to mediate the necessary vesicle extrusion and/or membrane fission activities, possibly in conjunction with the AAA ATPase VPS4. CHMP4A/B/C are required for the exosomal release of SDCBP, CD63 and syndecan. The polypeptide is Charged multivesicular body protein 4c (Chmp4c) (Rattus norvegicus (Rat)).